The following is a 221-amino-acid chain: Ribosomal RNA small subunit methyltransferase Nep1 (221 aa).

Residues G174, G179, and 196–201 (IGDETM) each bind S-adenosyl-L-methionine.

It belongs to the class IV-like SAM-binding methyltransferase superfamily. RNA methyltransferase NEP1 family. As to quaternary structure, homodimer.

The enzyme catalyses a pseudouridine in rRNA + S-adenosyl-L-methionine = an N(1)-methylpseudouridine in rRNA + S-adenosyl-L-homocysteine + H(+). Methyltransferase involved in ribosomal biogenesis. Specifically catalyzes the N1-methylation of the pseudouridine corresponding to position 914 in M.jannaschii 16S rRNA. This chain is Ribosomal RNA small subunit methyltransferase Nep1, found in Pyrobaculum islandicum (strain DSM 4184 / JCM 9189 / GEO3).